A 160-amino-acid polypeptide reads, in one-letter code: Large ribosomal subunit protein eL21B (160 aa).

Positions 114–140 are disordered; that stretch reads AKRKEAKAQGKTVQLRRQPAPPATAHF.

This sequence belongs to the eukaryotic ribosomal protein eL21 family. Component of the large ribosomal subunit (LSU). Mature yeast ribosomes consist of a small (40S) and a large (60S) subunit. The 40S small subunit contains 1 molecule of ribosomal RNA (18S rRNA) and at least 33 different proteins. The large 60S subunit contains 3 rRNA molecules (25S, 5.8S and 5S rRNA) and at least 46 different proteins.

It localises to the cytoplasm. Functionally, component of the ribosome, a large ribonucleoprotein complex responsible for the synthesis of proteins in the cell. The small ribosomal subunit (SSU) binds messenger RNAs (mRNAs) and translates the encoded message by selecting cognate aminoacyl-transfer RNA (tRNA) molecules. The large subunit (LSU) contains the ribosomal catalytic site termed the peptidyl transferase center (PTC), which catalyzes the formation of peptide bonds, thereby polymerizing the amino acids delivered by tRNAs into a polypeptide chain. The nascent polypeptides leave the ribosome through a tunnel in the LSU and interact with protein factors that function in enzymatic processing, targeting, and the membrane insertion of nascent chains at the exit of the ribosomal tunnel. The chain is Large ribosomal subunit protein eL21B (rpl2102) from Schizosaccharomyces pombe (strain 972 / ATCC 24843) (Fission yeast).